The following is a 173-amino-acid chain: MNPRRKSRFKLVIFVVLGIAIASGLMLYALRQNIDLFYTPSEVIQGKDNNPNQKPEVGQRIRVGGMVVEGTVVRDPKSLKVRFDLNDIGPAITVEYEGILPDLFREGQGIVAQGVLTQSAVLSATEVLAKHDENYVPPELGEKMQKVHKPMGIKAADLKGESERDRQEKEGAK.

Over 1–8 (MNPRRKSR) the chain is Cytoplasmic. The helical; Signal-anchor for type II membrane protein transmembrane segment at 9–29 (FKLVIFVVLGIAIASGLMLYA) threads the bilayer. Over 30–173 (LRQNIDLFYT…RDRQEKEGAK (144 aa)) the chain is Periplasmic. Positions 131 and 135 each coordinate heme. The interval 139–173 (ELGEKMQKVHKPMGIKAADLKGESERDRQEKEGAK) is disordered. Residues 156-173 (ADLKGESERDRQEKEGAK) are compositionally biased toward basic and acidic residues.

This sequence belongs to the CcmE/CycJ family.

It is found in the cell inner membrane. Heme chaperone required for the biogenesis of c-type cytochromes. Transiently binds heme delivered by CcmC and transfers the heme to apo-cytochromes in a process facilitated by CcmF and CcmH. The polypeptide is Cytochrome c-type biogenesis protein CcmE (Haemophilus influenzae (strain 86-028NP)).